We begin with the raw amino-acid sequence, 1422 residues long: Cardiac-enriched FHL2-interacting protein (1422 aa).

The segment at 1 to 23 (MQGNKKCADGFSDTSSIGSVLDE) is disordered. Thr119 carries the phosphothreonine modification. 9 disordered regions span residues 151–177 (RTEAQPCDSRPPPSKPPALKNTPKFAH), 199–265 (AGVS…GRGK), 279–443 (SAFE…SSPF), 459–500 (LETS…KAPS), 516–718 (YSPL…SDSQ), 731–850 (FSTS…TNKH), 877–1127 (VSSE…HLER), 1142–1244 (TGAA…GWEP), and 1353–1422 (RQGS…EGVS). Polar residues predominate over residues 201–210 (VSSTHQSSHQ). Composition is skewed to basic and acidic residues over residues 284–298 (WDAHQPKLRERKDIT) and 305–315 (KAPKHYEDMPL). Ser327 is modified (phosphoserine). Residues 342–351 (SPSGIQSTSG) are compositionally biased toward polar residues. A compositionally biased stretch (basic and acidic residues) spans 395–405 (GPHDASEDKKQ). Over residues 461 to 470 (TSDTQPVETS) the composition is skewed to polar residues. At Ser472 the chain carries Phosphoserine. Composition is skewed to basic and acidic residues over residues 481–495 (QEKESSEAQSRDSYK), 524–537 (GFDEKTRGKLDGKQ), and 579–588 (PAMDSRESFA). Low complexity predominate over residues 590 to 606 (SHPTFSSPSASSKTHFS). 3 stretches are compositionally biased toward basic and acidic residues: residues 611 to 622 (AAERNSHEKEEA), 635 to 644 (WHPDSRENLP), and 653 to 675 (CNRDSETGQATEKMKPRQLEKRL). Residues 731-744 (FSTSSSDQSFASFE) show a composition bias toward low complexity. A compositionally biased stretch (basic and acidic residues) spans 790 to 801 (GVEEHRQKETQR). A Phosphoserine modification is found at Ser815. Basic and acidic residues predominate over residues 828–839 (ADKDTALSHAKD). Composition is skewed to polar residues over residues 907–926 (SESQEMRNTPLSNSTPSTEQ) and 944–954 (QDETSQQTRKG). The segment covering 975 to 991 (ADERLAHEKSRSADSGK) has biased composition (basic and acidic residues). Residues 1048–1067 (AATSPNPSSLGGSSTCSPAA) are compositionally biased toward polar residues. Pro residues predominate over residues 1087–1099 (PPGPGPWASPGPS). Over residues 1173 to 1184 (RRAKKLASKRRK) the composition is skewed to basic residues. Over residues 1185 to 1202 (SDQMSEKHTEAWEGKSFT) the composition is skewed to basic and acidic residues. Over residues 1353–1366 (RQGSSHRPQSSQGA) the composition is skewed to polar residues. A compositionally biased stretch (acidic residues) spans 1411–1422 (DDLEDFATEGVS).

Interacts with FHL2.

Its subcellular location is the cytoplasm. The protein resides in the myofibril. It is found in the sarcomere. It localises to the z line. Functionally, plays an important role in cardiomyocyte hypertrophy via activation of the calcineurin/NFAT signaling pathway. This Rattus norvegicus (Rat) protein is Cardiac-enriched FHL2-interacting protein.